The chain runs to 77 residues: NADH-ubiquinone oxidoreductase chain 4L (77 aa).

The next 2 membrane-spanning stretches (helical) occupy residues 15–37 (WQRLIFILISLEFMMLSLFLKFS) and 44–64 (MFFYFMCFSVISSILGMVVMV).

This sequence belongs to the complex I subunit 4L family.

The protein resides in the mitochondrion membrane. The catalysed reaction is a ubiquinone + NADH + 5 H(+)(in) = a ubiquinol + NAD(+) + 4 H(+)(out). In terms of biological role, core subunit of the mitochondrial membrane respiratory chain NADH dehydrogenase (Complex I) that is believed to belong to the minimal assembly required for catalysis. Complex I functions in the transfer of electrons from NADH to the respiratory chain. The immediate electron acceptor for the enzyme is believed to be ubiquinone. This is NADH-ubiquinone oxidoreductase chain 4L from Caenorhabditis elegans.